A 170-amino-acid polypeptide reads, in one-letter code: Peptide deformylase (170 aa).

Fe cation is bound by residues C93 and H135. The active site involves E136. H139 is a Fe cation binding site.

The protein belongs to the polypeptide deformylase family. The cofactor is Fe(2+).

It catalyses the reaction N-terminal N-formyl-L-methionyl-[peptide] + H2O = N-terminal L-methionyl-[peptide] + formate. Functionally, removes the formyl group from the N-terminal Met of newly synthesized proteins. Requires at least a dipeptide for an efficient rate of reaction. N-terminal L-methionine is a prerequisite for activity but the enzyme has broad specificity at other positions. This is Peptide deformylase from Syntrophobacter fumaroxidans (strain DSM 10017 / MPOB).